The sequence spans 41 residues: U-megalopygitoxin(4)-Mo5 (41 aa).

The first 23 residues, 1–23 (MKCSLLLVVFAAMVALFAAGTNA), serve as a signal peptide directing secretion.

The protein belongs to the caterpillar 4 family. As to expression, expressed by the venom apparatus.

It is found in the secreted. Functionally, probable toxin. The polypeptide is U-megalopygitoxin(4)-Mo5 (Megalopyge opercularis (Southern flannel moth)).